We begin with the raw amino-acid sequence, 290 residues long: Bifunctional protein FolD (290 aa).

NADP(+) is bound by residues 167–169 (GRS), serine 192, and isoleucine 233.

This sequence belongs to the tetrahydrofolate dehydrogenase/cyclohydrolase family. As to quaternary structure, homodimer.

The catalysed reaction is (6R)-5,10-methylene-5,6,7,8-tetrahydrofolate + NADP(+) = (6R)-5,10-methenyltetrahydrofolate + NADPH. The enzyme catalyses (6R)-5,10-methenyltetrahydrofolate + H2O = (6R)-10-formyltetrahydrofolate + H(+). The protein operates within one-carbon metabolism; tetrahydrofolate interconversion. Functionally, catalyzes the oxidation of 5,10-methylenetetrahydrofolate to 5,10-methenyltetrahydrofolate and then the hydrolysis of 5,10-methenyltetrahydrofolate to 10-formyltetrahydrofolate. This Gloeobacter violaceus (strain ATCC 29082 / PCC 7421) protein is Bifunctional protein FolD.